The sequence spans 775 residues: Dipeptidyl peptidase 4 (775 aa).

A signal peptide spans 1–15; sequence MKFLSLLLLVGVAQA. N81, N111, and N219 each carry an N-linked (GlcNAc...) asparagine glycan. Catalysis depends on charge relay system residues S613, D690, and H725. The N-linked (GlcNAc...) asparagine glycan is linked to N731.

It belongs to the peptidase S9B family.

It is found in the secreted. The enzyme catalyses Release of an N-terminal dipeptide, Xaa-Yaa-|-Zaa-, from a polypeptide, preferentially when Yaa is Pro, provided Zaa is neither Pro nor hydroxyproline.. Its function is as follows. Extracellular dipeptidyl-peptidase which removes N-terminal dipeptides sequentially from polypeptides having unsubstituted N-termini provided that the penultimate residue is proline. Contributes to pathogenicity. In Arthroderma otae (strain ATCC MYA-4605 / CBS 113480) (Microsporum canis), this protein is Dipeptidyl peptidase 4 (DPP4).